A 67-amino-acid polypeptide reads, in one-letter code: NSVHPCCDPVKCEPREGEHCISGPCCRNCYFLRAGTVCKRAVGDDVDDYCSGITPDCPRNRYKGKED.

The Disintegrin domain occupies Asn-1–Lys-65. Disulfide bonds link Cys-6–Cys-29, Cys-20–Cys-26, Cys-25–Cys-50, and Cys-38–Cys-57. Positions Val-42 to Asp-44 match the Cell attachment site; atypical (VGD) motif.

It belongs to the venom metalloproteinase (M12B) family. P-II subfamily. P-IIe sub-subfamily. As to quaternary structure, heterodimer with EC3B; disulfide-linked. Expressed by the venom gland.

Its subcellular location is the secreted. Its function is as follows. Inhibits adhesion of cells expressing alpha-4/beta-1 (ITGA4/ITGB1) and alpha-4/beta-7 (ITGA4/ITGB7) integrins to the natural ligands vascular cell adhesion molecule 1 (VCAM-1) and mucosal addressin cell adhesion molecule 1 (MADCAM-1). It is also a weaker inhibitor of alpha-5/beta-1 (ITGA5/ITGB1) and alpha-2b/beta-3 (ITGA2B/ITGB3) integrins. The inhibitory activity of EC3 towards alpha-4 integrins is associated with the MLD sequence of EC3B subunit. The ability of EC3 to inhibit ITGA5/ITGB1 resides in both subunits A and B. This Echis carinatus (Saw-scaled viper) protein is Disintegrin EC3A.